Consider the following 77-residue polypeptide: Liver-expressed antimicrobial peptide 2 (77 aa).

Positions Met-1–Gly-22 are cleaved as a signal peptide. Residues Ser-23–Arg-37 constitute a propeptide that is removed on maturation. Cystine bridges form between Cys-54-Cys-65 and Cys-60-Cys-70.

Belongs to the LEAP2 family.

The protein localises to the secreted. In terms of biological role, has an antimicrobial activity. This is Liver-expressed antimicrobial peptide 2 (LEAP2) from Bos taurus (Bovine).